A 115-amino-acid chain; its full sequence is U3-lycotoxin-Ls1o (115 aa).

An N-terminal signal peptide occupies residues 1–20 (MKFVLLFGVLLVTLFSYSSA). A propeptide spanning residues 21–44 (EMLDDFDQADEDELLSLIEKEEAR) is cleaved from the precursor. 4 disulfides stabilise this stretch: Cys-48-Cys-63, Cys-55-Cys-72, Cys-62-Cys-87, and Cys-74-Cys-85.

It belongs to the neurotoxin 19 (CSTX) family. 01 subfamily. Expressed by the venom gland.

The protein localises to the secreted. The chain is U3-lycotoxin-Ls1o from Lycosa singoriensis (Wolf spider).